The chain runs to 26 residues: uncharacterized protein (26 aa).

Residues 3-23 form a helical membrane-spanning segment; that stretch reads IIYLILFLIVIYLLYRILDVL.

It localises to the membrane. This is an uncharacterized protein from Helicobacter pylori (strain J99 / ATCC 700824) (Campylobacter pylori J99).